The following is a 467-amino-acid chain: uncharacterized protein (467 aa).

The disordered stretch occupies residues 1-60 (MVRVSRGCQSCVDAKLQSTPSPSPSKSPSPTESPEQCLQKRQSGEQVVLPSRPFPRTSPR).

Its function is as follows. Involved in osmoadaptation. This is an uncharacterized protein from Emericella nidulans (strain FGSC A4 / ATCC 38163 / CBS 112.46 / NRRL 194 / M139) (Aspergillus nidulans).